The following is a 329-amino-acid chain: Flotillin-like protein FloA (329 aa).

The next 2 helical transmembrane spans lie at 6 to 26 and 27 to 47; these read FIVI…FVPI and GLWI…LVGM.

Belongs to the flotillin-like FloA family. In terms of assembly, homooligomerizes.

It localises to the cell membrane. The protein localises to the membrane raft. Functionally, found in functional membrane microdomains (FMM) that may be equivalent to eukaryotic membrane rafts. FMMs are highly dynamic and increase in number as cells age. Flotillins are thought to be important factors in membrane fluidity. In Staphylococcus aureus (strain JH1), this protein is Flotillin-like protein FloA.